An 814-amino-acid chain; its full sequence is Protein fam-161 (814 aa).

Over residues 71 to 87 (ITQHRSSYKVTKSSSCH) the composition is skewed to polar residues. 4 disordered regions span residues 71-130 (ITQH…SWSQ), 150-255 (RHQV…ATSA), 569-610 (SRSK…THAT), and 714-814 (MKSA…SSEA). Basic and acidic residues predominate over residues 99–111 (MPRHLDLKPRSSE). A compositionally biased stretch (low complexity) spans 174 to 193 (STAPSQVSVTSSVQSVAALS). Polar residues-rich tracts occupy residues 194-207 (GQNP…TPSH) and 216-235 (RTHQ…TLQN). The segment covering 236–249 (PRHRTSSASRHHST) has biased composition (basic residues). Polar residues-rich tracts occupy residues 570-583 (RSKS…NCQE) and 594-610 (ENLP…THAT). Residues 606 to 689 (STHATQLREE…LAEMKQRVLN (84 aa)) adopt a coiled-coil conformation. The span at 714-727 (MKSAKGRGIERVQS) shows a compositional bias: basic and acidic residues. Positions 728-745 (QEKQQSIGRRSSEVSGSG) are enriched in polar residues. Basic and acidic residues predominate over residues 751–765 (KGYEESFESEDKSEK). 2 stretches are compositionally biased toward low complexity: residues 766 to 779 (SGSS…SGSE) and 795 to 814 (SKST…SSEA).

Belongs to the FAM161 family. Expressed in amphid and phasmid ciliated neurons.

It localises to the cell projection. Its subcellular location is the cilium. The protein localises to the cytoplasm. The protein resides in the cytoskeleton. It is found in the cilium axoneme. The chain is Protein fam-161 from Caenorhabditis elegans.